The chain runs to 226 residues: Lipoprotein-releasing system ATP-binding protein LolD (226 aa).

Residues 5–226 (LRCEKISKFY…MADGVLREAS (222 aa)) enclose the ABC transporter domain. 41–48 (GSSGSGKS) contacts ATP.

It belongs to the ABC transporter superfamily. Lipoprotein translocase (TC 3.A.1.125) family. In terms of assembly, the complex is composed of two ATP-binding proteins (LolD) and two transmembrane proteins (LolC and LolE).

The protein resides in the cell inner membrane. Functionally, part of the ABC transporter complex LolCDE involved in the translocation of mature outer membrane-directed lipoproteins, from the inner membrane to the periplasmic chaperone, LolA. Responsible for the formation of the LolA-lipoprotein complex in an ATP-dependent manner. In Haemophilus ducreyi (strain 35000HP / ATCC 700724), this protein is Lipoprotein-releasing system ATP-binding protein LolD.